Here is a 245-residue protein sequence, read N- to C-terminus: MSQVNMRDMLKAGVHFGHQTRYWNPKMGKYIFGARNKIHIINLEKTLPMFNDALAFVERLAQGKNKIMFVGTKRSAGKIVAEQAARAGSPYVDHRWLGGMLTNYKTIRASIKRLRDLETQAEDGTFAKLTKKEALMRSRDLEKLDRSLGGIKDMGGLPDALFVIDVDHERIAITEANKLGIPVIGVVDTNSSPEGVDYIIPGNDDAIRAIELYMTSMADAIIRGRNNVAGGTEVYVEEAAAPAAE.

Belongs to the universal ribosomal protein uS2 family.

The protein is Small ribosomal subunit protein uS2 of Pseudomonas putida (strain GB-1).